The following is an 89-amino-acid chain: Small ribosomal subunit protein bS16 (89 aa).

The protein belongs to the bacterial ribosomal protein bS16 family.

The sequence is that of Small ribosomal subunit protein bS16 from Desulforamulus reducens (strain ATCC BAA-1160 / DSM 100696 / MI-1) (Desulfotomaculum reducens).